The sequence spans 360 residues: Fructose import permease protein FrcC (360 aa).

9 helical membrane-spanning segments follow: residues 48 to 68, 84 to 106, 125 to 145, 155 to 175, 205 to 225, 254 to 274, 284 to 304, 310 to 330, and 335 to 355; these read AAVP…ILGG, AIVG…DLSV, GFPP…CGYI, LPPF…NFLY, AVFT…WYVL, MLIS…WALI, AGQF…ISLF, IMGM…LRLM, and QWTY…DQWI.

The protein belongs to the binding-protein-dependent transport system permease family. In terms of assembly, the complex is composed of two ATP-binding proteins (FrcA), two transmembrane proteins (FrcC) and a solute-binding protein (FrcB).

It is found in the cell inner membrane. Functionally, part of the high-affinity ABC transporter complex FrcBCA involved in fructose uptake. Is also a high-affinity transporter for ribose and mannose. Responsible for the translocation of the substrate across the membrane. The sequence is that of Fructose import permease protein FrcC from Rhizobium meliloti (Ensifer meliloti).